The sequence spans 262 residues: Adenosylcobinamide-GDP ribazoletransferase (262 aa).

Helical transmembrane passes span 43-63 (YFGL…WLTQ), 66-86 (LPAG…TGGF), 120-140 (GALA…ELAL), 146-166 (AGSA…SLIF), 191-211 (LFIL…IAAL), and 242-262 (AAQQ…GSIL).

Belongs to the CobS family. It depends on Mg(2+) as a cofactor.

It localises to the cell inner membrane. The catalysed reaction is alpha-ribazole + adenosylcob(III)inamide-GDP = adenosylcob(III)alamin + GMP + H(+). It catalyses the reaction alpha-ribazole 5'-phosphate + adenosylcob(III)inamide-GDP = adenosylcob(III)alamin 5'-phosphate + GMP + H(+). It functions in the pathway cofactor biosynthesis; adenosylcobalamin biosynthesis; adenosylcobalamin from cob(II)yrinate a,c-diamide: step 7/7. Its function is as follows. Joins adenosylcobinamide-GDP and alpha-ribazole to generate adenosylcobalamin (Ado-cobalamin). Also synthesizes adenosylcobalamin 5'-phosphate from adenosylcobinamide-GDP and alpha-ribazole 5'-phosphate. The chain is Adenosylcobinamide-GDP ribazoletransferase from Shewanella sp. (strain ANA-3).